Here is a 188-residue protein sequence, read N- to C-terminus: Nicotinamide-nucleotide adenylyltransferase (188 aa).

The protein belongs to the archaeal NMN adenylyltransferase family.

The protein resides in the cytoplasm. It carries out the reaction beta-nicotinamide D-ribonucleotide + ATP + H(+) = diphosphate + NAD(+). It functions in the pathway cofactor biosynthesis; NAD(+) biosynthesis; NAD(+) from nicotinamide D-ribonucleotide: step 1/1. In Thermococcus kodakarensis (strain ATCC BAA-918 / JCM 12380 / KOD1) (Pyrococcus kodakaraensis (strain KOD1)), this protein is Nicotinamide-nucleotide adenylyltransferase.